We begin with the raw amino-acid sequence, 176 residues long: Nucleoside triphosphate/diphosphate phosphatase (176 aa).

Residue arginine 23 is the Proton donor of the active site. Residues asparagine 87, aspartate 103, aspartate 105, aspartate 107, aspartate 120, and glutamate 123 each contribute to the Mg(2+) site.

This sequence belongs to the Ntdp family. Mg(2+) is required as a cofactor.

It carries out the reaction a ribonucleoside 5'-triphosphate + H2O = a ribonucleoside 5'-diphosphate + phosphate + H(+). It catalyses the reaction a ribonucleoside 5'-diphosphate + H2O = a ribonucleoside 5'-phosphate + phosphate + H(+). In terms of biological role, has nucleoside phosphatase activity towards nucleoside triphosphates and nucleoside diphosphates. This is Nucleoside triphosphate/diphosphate phosphatase from Bacillus pumilus (strain SAFR-032).